The primary structure comprises 355 residues: UDP-3-O-acylglucosamine N-acyltransferase (355 aa).

The active-site Proton acceptor is His-252.

It belongs to the transferase hexapeptide repeat family. LpxD subfamily. In terms of assembly, homotrimer.

It catalyses the reaction a UDP-3-O-[(3R)-3-hydroxyacyl]-alpha-D-glucosamine + a (3R)-hydroxyacyl-[ACP] = a UDP-2-N,3-O-bis[(3R)-3-hydroxyacyl]-alpha-D-glucosamine + holo-[ACP] + H(+). It functions in the pathway bacterial outer membrane biogenesis; LPS lipid A biosynthesis. Functionally, catalyzes the N-acylation of UDP-3-O-acylglucosamine using 3-hydroxyacyl-ACP as the acyl donor. Is involved in the biosynthesis of lipid A, a phosphorylated glycolipid that anchors the lipopolysaccharide to the outer membrane of the cell. The polypeptide is UDP-3-O-acylglucosamine N-acyltransferase (Polynucleobacter necessarius subsp. necessarius (strain STIR1)).